The primary structure comprises 157 residues: Large ribosomal subunit protein eL21 (157 aa).

The segment at 110–132 (QANDQAKAEGNKAGKRVSTKRNP) is disordered.

This sequence belongs to the eukaryotic ribosomal protein eL21 family.

The polypeptide is Large ribosomal subunit protein eL21 (RPL21) (Tetrahymena thermophila (strain SB210)).